The chain runs to 94 residues: MIKSELVQKIAEANPHLYQRDVENIVNAILDQIVDALAQGDRVELRGFGAFSVKQREARTGRNPRTGKQVDVSSKVVPYFKTGKEMRERLNGAA.

This sequence belongs to the bacterial histone-like protein family. As to quaternary structure, heterodimer of an alpha and a beta chain.

Its function is as follows. This protein is one of the two subunits of integration host factor, a specific DNA-binding protein that functions in genetic recombination as well as in transcriptional and translational control. This Azorhizobium caulinodans (strain ATCC 43989 / DSM 5975 / JCM 20966 / LMG 6465 / NBRC 14845 / NCIMB 13405 / ORS 571) protein is Integration host factor subunit beta.